We begin with the raw amino-acid sequence, 152 residues long: Heavy metal-associated isoprenylated plant protein 22 (152 aa).

Residues methionine 28–alanine 91 enclose the HMA domain. The a metal cation site is built by cysteine 39 and cysteine 42. The interval serine 123–methionine 152 is disordered. The span at serine 142 to methionine 152 shows a compositional bias: polar residues. Cysteine methyl ester is present on cysteine 149. Residue cysteine 149 is the site of S-farnesyl cysteine attachment. Residues threonine 150–methionine 152 constitute a propeptide, removed in mature form.

This sequence belongs to the HIPP family. In terms of assembly, interacts with ZHD11/HB29. As to expression, expressed in lateral roots and mature anthers.

The protein resides in the membrane. Its function is as follows. Heavy-metal-binding protein. Binds cadmium. May be involved in cadmium transport and play a role in cadmium detoxification. This is Heavy metal-associated isoprenylated plant protein 22 from Arabidopsis thaliana (Mouse-ear cress).